A 211-amino-acid chain; its full sequence is Arginine exporter protein ArgO (211 aa).

Transmembrane regions (helical) follow at residues 1–21, 37–57, 68–88, 111–131, 147–167, and 179–199; these read MISY…PLGP, LMIA…GIFG, LLAL…FGAL, IIAT…DTFV, WFAL…ALLA, and AQRI…FQLA.

This sequence belongs to the LysE/ArgO transporter (TC 2.A.75) family.

It is found in the cell inner membrane. The catalysed reaction is L-arginine(in) = L-arginine(out). Involved in the export of arginine. Important to control the intracellular level of arginine and the correct balance between arginine and lysine. This is Arginine exporter protein ArgO from Salmonella newport (strain SL254).